We begin with the raw amino-acid sequence, 306 residues long: Homoserine kinase (306 aa).

91–101 is an ATP binding site; it reads PLARGLGSSAA.

This sequence belongs to the GHMP kinase family. Homoserine kinase subfamily.

It localises to the cytoplasm. The catalysed reaction is L-homoserine + ATP = O-phospho-L-homoserine + ADP + H(+). It functions in the pathway amino-acid biosynthesis; L-threonine biosynthesis; L-threonine from L-aspartate: step 4/5. Functionally, catalyzes the ATP-dependent phosphorylation of L-homoserine to L-homoserine phosphate. The sequence is that of Homoserine kinase from Bacillus licheniformis (strain ATCC 14580 / DSM 13 / JCM 2505 / CCUG 7422 / NBRC 12200 / NCIMB 9375 / NCTC 10341 / NRRL NRS-1264 / Gibson 46).